Here is a 192-residue protein sequence, read N- to C-terminus: ADP-ribosylation factor-like protein 4C (192 aa).

Gly2 carries N-myristoyl glycine lipidation. GTP contacts are provided by residues Gly20–Thr27, Asp68–Gln72, and Asn127–Asp130.

Belongs to the small GTPase superfamily. Arf family. Interacts with CYTH2. Interacts with alpha tubulin; interaction is independent on the ARL4C GTP or GDP binding status. Expressed in several tumor cell lines (at protein level). Expressed in lung, brain, leukocytes and placenta.

The protein localises to the cell projection. It localises to the filopodium. It is found in the cell membrane. The protein resides in the cytoplasm. In terms of biological role, small GTP-binding protein which cycles between an inactive GDP-bound and an active GTP-bound form, and the rate of cycling is regulated by guanine nucleotide exchange factors (GEF) and GTPase-activating proteins (GAP). GTP-binding protein that does not act as an allosteric activator of the cholera toxin catalytic subunit. May be involved in transport between a perinuclear compartment and the plasma membrane, apparently linked to the ABCA1-mediated cholesterol secretion pathway. Recruits CYTH1, CYTH2, CYTH3 and CYTH4 to the plasma membrane in the GDP-bound form. Regulates the microtubule-dependent intracellular vesicular transport from early endosome to recycling endosome process. This is ADP-ribosylation factor-like protein 4C (ARL4C) from Homo sapiens (Human).